Consider the following 142-residue polypeptide: MNFKYIVAVSFLIASGYARSEENDVQSLSQREVLEEESLREIRGIGGALLSAGKSALKGLAKGFAEHFGKRTAEDHEVMKRLEAVMRDLDSLDHPEEASERETRGFNQEEIANLFTKKEKRILGPVLSLVGSALGGLIKKIG.

The first 18 residues, 1–18, serve as a signal peptide directing secretion; the sequence is MNFKYIVAVSFLIASGYA. The propeptide occupies 19-43; it reads RSEENDVQSLSQREVLEEESLREIR. Residue phenylalanine 68 is modified to Phenylalanine amide. The propeptide occupies 72 to 121; that stretch reads TAEDHEVMKRLEAVMRDLDSLDHPEEASERETRGFNQEEIANLFTKKEKR. The residue at position 141 (isoleucine 141) is an Isoleucine amide.

Belongs to the bombinin family. In terms of tissue distribution, expressed by the skin glands.

Its subcellular location is the secreted. Its function is as follows. Maximin-y shows antimicrobial activity against bacteria and against the fungus C.albicans. It has little hemolytic activity. Functionally, maximin-Hv shows antimicrobial activity against bacteria and against the fungus C.albicans. Shows strong hemolytic activity. This Bombina maxima (Giant fire-bellied toad) protein is Maximins y/Hv type 1.